The following is a 416-amino-acid chain: Diaminobutyrate--2-oxoglutarate transaminase (416 aa).

The residue at position 263 (K263) is an N6-(pyridoxal phosphate)lysine.

The protein belongs to the class-III pyridoxal-phosphate-dependent aminotransferase family. Pyridoxal 5'-phosphate is required as a cofactor.

The enzyme catalyses L-2,4-diaminobutanoate + 2-oxoglutarate = L-aspartate 4-semialdehyde + L-glutamate. Its pathway is amine and polyamine biosynthesis; ectoine biosynthesis; L-ectoine from L-aspartate 4-semialdehyde: step 1/3. In terms of biological role, catalyzes reversively the conversion of L-aspartate beta-semialdehyde (ASA) to L-2,4-diaminobutyrate (DABA) by transamination with L-glutamate. The chain is Diaminobutyrate--2-oxoglutarate transaminase (ectB) from Virgibacillus pantothenticus.